The sequence spans 445 residues: Phosphoglucosamine mutase (445 aa).

Ser-102 (phosphoserine intermediate) is an active-site residue. Mg(2+) is bound by residues Ser-102, Asp-241, Asp-243, and Asp-245. Position 102 is a phosphoserine (Ser-102).

Belongs to the phosphohexose mutase family. Requires Mg(2+) as cofactor. In terms of processing, activated by phosphorylation.

It carries out the reaction alpha-D-glucosamine 1-phosphate = D-glucosamine 6-phosphate. Catalyzes the conversion of glucosamine-6-phosphate to glucosamine-1-phosphate. This chain is Phosphoglucosamine mutase, found in Sodalis glossinidius (strain morsitans).